The following is a 345-amino-acid chain: Anthranilate phosphoribosyltransferase (345 aa).

Residues Gly81, 84 to 85 (GD), Ser89, 91 to 94 (NVST), 109 to 117 (KHGNRAATS), and Ala121 contribute to the 5-phospho-alpha-D-ribose 1-diphosphate site. Gly81 contributes to the anthranilate binding site. Ser93 contacts Mg(2+). Position 112 (Asn112) interacts with anthranilate. Anthranilate is bound at residue Arg167. Mg(2+) contacts are provided by Asp226 and Glu227.

It belongs to the anthranilate phosphoribosyltransferase family. Homodimer. The cofactor is Mg(2+).

The enzyme catalyses N-(5-phospho-beta-D-ribosyl)anthranilate + diphosphate = 5-phospho-alpha-D-ribose 1-diphosphate + anthranilate. It participates in amino-acid biosynthesis; L-tryptophan biosynthesis; L-tryptophan from chorismate: step 2/5. In terms of biological role, catalyzes the transfer of the phosphoribosyl group of 5-phosphorylribose-1-pyrophosphate (PRPP) to anthranilate to yield N-(5'-phosphoribosyl)-anthranilate (PRA). The polypeptide is Anthranilate phosphoribosyltransferase (Methylobacterium radiotolerans (strain ATCC 27329 / DSM 1819 / JCM 2831 / NBRC 15690 / NCIMB 10815 / 0-1)).